The sequence spans 962 residues: MATTAASSASEPEVEPQAGPEAEGEEDEAKPAGVQRKVLSGAVAAEAAEAKGPGWDLQREGASGSDGDEEDAMASSAESSAGEDEWEYDEEEEKNQLEIERLEEQLSINGYDYNCHVELIRLLRLEGELSRVRAARQKMSELFPLTEELWLEWLHDEISMAMDGLDREHVYELFERAVKDYICPNIWLEYGQYSVGGIGQKGGLEKVRSVFERALSSVGLHMTKGLAIWEAYREFESAIVEAARLEKVHSLFRRQLAIPLYEMEATFAEYEEWSEEPMPESVLQSYQKALGQLEKYKPYEEALLQAEAPRLAEYQAYIDFEMKIGDPARIQLIFERALVENCLVPDLWIRYSQYLDRQLKVKDLVLSVHSRAVRNCPWTVALWSRYLLAMERHGLDHQTISATFENALSAGFIQATDYVEIWQVYLDYLRRRVDFRQDSSKELEELRSMFTRALEYLQQEVEERFSESGDPSCLIMQSWARVEARLCNNMQKARELWDSIMTRGNAKYANMWLEYYNLERAHGDTQHCRKALHRAVQCTSDYPEHVCEVLLTMERTEGTLEDWDLAIQKTETRLARVNEQRMKAAEKEAALVQQEEEKAEQRKKVRAEKKALKKKKKTRGADKRREDEDEENEWGEEEEEQPSKRRRTENSLASGEASAMKEETELSGKCLTIDVGPPSKQKEKAASLKRDMPKVAHDSSKDSVTVFVSNLPYSIEEPEVKLRPLFEVCGEVVQIRPIFSNRGDFRGYCYVEFGEEKSAQQALELDRKIVEGRPMFVSPCVDKSKNPDFKVFRYSTTLEKHKLFISGLPFSCTKEELEDICKAHGTVKDLRLVTNRAGKPKGLAYVEYENESQASQAVMKMDGMTIRENVIKVAISNPPQRKVPEKPEVRTAPGAPMLPRQMYGARGKGRTQLSLLPRALQRQGAAPQAENGPAPGPAVAPSVATEAPKMSNADFAKLLLRK.

Low complexity predominate over residues 1–21; the sequence is MATTAASSASEPEVEPQAGPE. Positions 1–92 are disordered; that stretch reads MATTAASSAS…EDEWEYDEEE (92 aa). Position 2 is an N-acetylalanine (Ala-2). Residues 2 to 352 are mediates interaction with PRPF3; that stretch reads ATTAASSASE…LVPDLWIRYS (351 aa). Ser-10 is subject to Phosphoserine. The span at 81-92 shows a compositional bias: acidic residues; sequence AGEDEWEYDEEE. HAT repeat units lie at residues 127-159, 165-196, 202-238, 243-276, 325-357, 360-392, 395-431, 441-474, and 488-521; these read GELS…DEIS, LDRE…YSVG, GGLE…FESA, ARLE…WSEE, GDPA…YLDR, KVKD…AMER, LDHQ…YLRR, KELE…PSCL, and NNMQ…LERA. Ser-216 is subject to Phosphoserine. A required for interaction with USP4 region spans residues 488–521; the sequence is NNMQKARELWDSIMTRGNAKYANMWLEYYNLERA. Residues 538–952 form a necessary and sufficient for U6 snRNA binding region; it reads CTSDYPEHVC…VATEAPKMSN (415 aa). A coiled-coil region spans residues 559–618; that stretch reads TLEDWDLAIQKTETRLARVNEQRMKAAEKEAALVQQEEEKAEQRKKVRAEKKALKKKKKT. Basic and acidic residues predominate over residues 591-602; sequence LVQQEEEKAEQR. Residues 591–696 form a disordered region; the sequence is LVQQEEEKAE…SLKRDMPKVA (106 aa). The segment at 601–670 is required for nuclear localization; it reads QRKKVRAEKK…KEETELSGKC (70 aa). A Nuclear localization signal motif is present at residues 602–609; the sequence is RKKVRAEK. The segment covering 603–618 has biased composition (basic residues); that stretch reads KKVRAEKKALKKKKKT. Acidic residues predominate over residues 627–640; sequence DEDEENEWGEEEEE. At Ser-651 the chain carries Phosphoserine. Residues 680 to 696 are compositionally biased toward basic and acidic residues; that stretch reads KQKEKAASLKRDMPKVA. An RRM 1 domain is found at 704 to 782; that stretch reads VTVFVSNLPY…RPMFVSPCVD (79 aa). 2 positions are modified to phosphoserine: Ser-795 and Ser-852. Residues 801-878 enclose the RRM 2 domain; it reads HKLFISGLPF…NVIKVAISNP (78 aa). Residues 880–962 form a disordered region; the sequence is QRKVPEKPEV…ADFAKLLLRK (83 aa). The residue at position 906 (Arg-906) is an Omega-N-methylarginine.

In terms of assembly, component of the 7SK snRNP complex at least composed of P-TEFb (composed of CDK9 and CCNT1/cyclin-T1), HEXIM1, HEXIM2, BCDIN3, SART3 proteins and 7SK and U6 snRNAs. Interacts with AGO1 and AGO2. Interacts with PRPF3 and USP4; the interaction with PRPF3 is direct and recruits USP4 to its substrate PRPF3. Interacts with USP15; the interaction is direct. Ubiquitously expressed, with low level of expression in liver, heart and skeletal. Also detected in hematopoietic cells (at protein level).

It localises to the nucleus. It is found in the nucleoplasm. The protein localises to the cajal body. Its subcellular location is the nucleus speckle. The protein resides in the cytoplasm. In terms of biological role, U6 snRNP-binding protein that functions as a recycling factor of the splicing machinery. Promotes the initial reassembly of U4 and U6 snRNPs following their ejection from the spliceosome during its maturation. Also binds U6atac snRNPs and may function as a recycling factor for U4atac/U6atac spliceosomal snRNP, an initial step in the assembly of U12-type spliceosomal complex. The U12-type spliceosomal complex plays a role in the splicing of introns with non-canonical splice sites. May also function as a substrate-targeting factor for deubiquitinases like USP4 and USP15. Recruits USP4 to ubiquitinated PRPF3 within the U4/U5/U6 tri-snRNP complex, promoting PRPF3 deubiquitination and thereby regulating the spliceosome U4/U5/U6 tri-snRNP spliceosomal complex disassembly. May also recruit the deubiquitinase USP15 to histone H2B and mediate histone deubiquitination, thereby regulating gene expression and/or DNA repair. May play a role in hematopoiesis probably through transcription regulation of specific genes including MYC. The polypeptide is Spliceosome associated factor 3, U4/U6 recycling protein (Mus musculus (Mouse)).